Consider the following 297-residue polypeptide: Golgi-associated RAB2 interactor protein 1A (297 aa).

The tract at residues 226-257 (SNRHQTSRDRHTDTATETDNSGNCKSTPLVAS) is disordered. The segment covering 240-257 (ATETDNSGNCKSTPLVAS) has biased composition (polar residues).

Belongs to the GARIN family. In terms of assembly, interacts (via N-terminus) with RAB2B (in GTP-bound form). As to expression, expressed in testis (at protein level).

It localises to the golgi apparatus. RAB2B effector protein required for accurate acrosome formation and normal male fertility. The sequence is that of Golgi-associated RAB2 interactor protein 1A from Mus musculus (Mouse).